Consider the following 354-residue polypeptide: Uroporphyrinogen decarboxylase (354 aa).

Substrate-binding positions include 27-31 (RQAGR), D77, Y154, T209, and H327.

The protein belongs to the uroporphyrinogen decarboxylase family. Homodimer.

It is found in the cytoplasm. The enzyme catalyses uroporphyrinogen III + 4 H(+) = coproporphyrinogen III + 4 CO2. It functions in the pathway porphyrin-containing compound metabolism; protoporphyrin-IX biosynthesis; coproporphyrinogen-III from 5-aminolevulinate: step 4/4. Catalyzes the decarboxylation of four acetate groups of uroporphyrinogen-III to yield coproporphyrinogen-III. This chain is Uroporphyrinogen decarboxylase, found in Hydrogenovibrio crunogenus (strain DSM 25203 / XCL-2) (Thiomicrospira crunogena).